A 484-amino-acid chain; its full sequence is MQFKQDFFTQLPEFYSQVYPQGLSHPQWLAWSHDAAQLIGLTQPTDELLLGLSGNAAIDGATYYAQVYSGHQFGGYTPRLGDGRSIILGEAIGPNGAWDVALKGGGPTPYSRHGDGRAVMRSAVREFLVSEALYHLHVPTTRALAVIGSDMPVWRESQETAAITVRLARSHIRFGHFEFFCHSERGRADKLLQLLNFTITQHYPHLSCDPSGYKAWFLQVVQDTAKMIAHWQAVGFAHGVMNTDNMSILGDSFDFGPFAFLDTFQEDFICNHSDPEGRYAFGQQPGVGLWNLQRLAQALTPVIPSDDLIAILNQYQEALVQTYLLLMRAKLGLTTLDKSTAEQDKQDLELIGQFTVLMEKNQLDYAQTWRQFGQLDPRSQHSSLRDDFIDTHQFDTWYKAYQLRLGDVTDIAAWQTERNSVNPKYILRNYLAQEAIIAVEEGNLAPLQRLQQVLSQPFAEQVEHDELAKRPPDWGQGLIMSCSS.

The ATP site is built by Gly-81, Gly-83, Arg-84, Lys-103, Asp-115, Gly-116, Arg-166, and Arg-173. Asp-244 serves as the catalytic Proton acceptor. Mg(2+)-binding residues include Asn-245 and Asp-254. Asp-254 is an ATP binding site.

It belongs to the SELO family. The cofactor is Mg(2+). It depends on Mn(2+) as a cofactor.

It catalyses the reaction L-seryl-[protein] + ATP = 3-O-(5'-adenylyl)-L-seryl-[protein] + diphosphate. The catalysed reaction is L-threonyl-[protein] + ATP = 3-O-(5'-adenylyl)-L-threonyl-[protein] + diphosphate. It carries out the reaction L-tyrosyl-[protein] + ATP = O-(5'-adenylyl)-L-tyrosyl-[protein] + diphosphate. The enzyme catalyses L-histidyl-[protein] + UTP = N(tele)-(5'-uridylyl)-L-histidyl-[protein] + diphosphate. It catalyses the reaction L-seryl-[protein] + UTP = O-(5'-uridylyl)-L-seryl-[protein] + diphosphate. The catalysed reaction is L-tyrosyl-[protein] + UTP = O-(5'-uridylyl)-L-tyrosyl-[protein] + diphosphate. Its function is as follows. Nucleotidyltransferase involved in the post-translational modification of proteins. It can catalyze the addition of adenosine monophosphate (AMP) or uridine monophosphate (UMP) to a protein, resulting in modifications known as AMPylation and UMPylation. This chain is Protein nucleotidyltransferase YdiU, found in Shewanella putrefaciens (strain CN-32 / ATCC BAA-453).